Reading from the N-terminus, the 326-residue chain is Type II methyltransferase M.EcoRI (326 aa).

This sequence belongs to the N(4)/N(6)-methyltransferase family. As to quaternary structure, monomer.

It catalyses the reaction a 2'-deoxyadenosine in DNA + S-adenosyl-L-methionine = an N(6)-methyl-2'-deoxyadenosine in DNA + S-adenosyl-L-homocysteine + H(+). A methylase that recognizes the double-stranded sequence 5'-GAATTC-3', methylates A-3 on both strands, and protects the DNA from cleavage by the EcoRI endonuclease. The protein is Type II methyltransferase M.EcoRI (ecoRIM) of Escherichia coli.